The following is a 318-amino-acid chain: Aspartate carbamoyltransferase catalytic subunit (318 aa).

Residues R54 and T55 each coordinate carbamoyl phosphate. K82 provides a ligand contact to L-aspartate. R104, H134, and Q137 together coordinate carbamoyl phosphate. Residues R174 and R230 each contribute to the L-aspartate site. Residues G271 and P272 each coordinate carbamoyl phosphate.

The protein belongs to the aspartate/ornithine carbamoyltransferase superfamily. ATCase family. Heterododecamer (2C3:3R2) of six catalytic PyrB chains organized as two trimers (C3), and six regulatory PyrI chains organized as three dimers (R2).

The catalysed reaction is carbamoyl phosphate + L-aspartate = N-carbamoyl-L-aspartate + phosphate + H(+). Its pathway is pyrimidine metabolism; UMP biosynthesis via de novo pathway; (S)-dihydroorotate from bicarbonate: step 2/3. Functionally, catalyzes the condensation of carbamoyl phosphate and aspartate to form carbamoyl aspartate and inorganic phosphate, the committed step in the de novo pyrimidine nucleotide biosynthesis pathway. The sequence is that of Aspartate carbamoyltransferase catalytic subunit from Clavibacter michiganensis subsp. michiganensis (strain NCPPB 382).